We begin with the raw amino-acid sequence, 529 residues long: Peptide chain release factor 3 (529 aa).

Residues 11 to 280 (SKRRTFAIIS…SLIKWAPSPI (270 aa)) enclose the tr-type G domain. Residues 20-27 (SHPDAGKT), 88-92 (DTPGH), and 142-145 (NKLD) each bind GTP.

The protein belongs to the TRAFAC class translation factor GTPase superfamily. Classic translation factor GTPase family. PrfC subfamily.

It is found in the cytoplasm. Its function is as follows. Increases the formation of ribosomal termination complexes and stimulates activities of RF-1 and RF-2. It binds guanine nucleotides and has strong preference for UGA stop codons. It may interact directly with the ribosome. The stimulation of RF-1 and RF-2 is significantly reduced by GTP and GDP, but not by GMP. The protein is Peptide chain release factor 3 of Buchnera aphidicola subsp. Schizaphis graminum (strain Sg).